We begin with the raw amino-acid sequence, 166 residues long: Large ribosomal subunit protein bL9 (166 aa).

The protein belongs to the bacterial ribosomal protein bL9 family.

In terms of biological role, binds to the 23S rRNA. The sequence is that of Large ribosomal subunit protein bL9 from Brachyspira hyodysenteriae (strain ATCC 49526 / WA1).